The primary structure comprises 180 residues: MKSRLEIKYKDQIVPELFKELNYKSIMQVPKIQKIVINMGIGDATTDPKKLDAAISELEKLSGQKPIVTKAKKSLAVFKLREGMAIGAKVTLRGKKMYDFLDKLINVALPRVRDFRGVSKTSFDGFGNFTTGIKEQIIFPEVDYDKVIRLRGMDITIVTSAKTNKEAFALLQKVGMPFEK.

This sequence belongs to the universal ribosomal protein uL5 family. In terms of assembly, part of the 50S ribosomal subunit; part of the 5S rRNA/L5/L18/L25 subcomplex. Contacts the 5S rRNA and the P site tRNA. Forms a bridge to the 30S subunit in the 70S ribosome.

In terms of biological role, this is one of the proteins that bind and probably mediate the attachment of the 5S RNA into the large ribosomal subunit, where it forms part of the central protuberance. In the 70S ribosome it contacts protein S13 of the 30S subunit (bridge B1b), connecting the 2 subunits; this bridge is implicated in subunit movement. Contacts the P site tRNA; the 5S rRNA and some of its associated proteins might help stabilize positioning of ribosome-bound tRNAs. The protein is Large ribosomal subunit protein uL5 of Mycoplasma mycoides subsp. mycoides SC (strain CCUG 32753 / NCTC 10114 / PG1).